A 209-amino-acid chain; its full sequence is Kynurenine formamidase (209 aa).

Trp20 provides a ligand contact to substrate. Zn(2+) contacts are provided by His50, His54, and Asp56. His60 acts as the Proton donor/acceptor in catalysis. Zn(2+) is bound by residues His161 and Glu173.

The protein belongs to the Cyclase 1 superfamily. KynB family. Homodimer. The cofactor is Zn(2+).

The catalysed reaction is N-formyl-L-kynurenine + H2O = L-kynurenine + formate + H(+). The protein operates within amino-acid degradation; L-tryptophan degradation via kynurenine pathway; L-kynurenine from L-tryptophan: step 2/2. In terms of biological role, catalyzes the hydrolysis of N-formyl-L-kynurenine to L-kynurenine, the second step in the kynurenine pathway of tryptophan degradation. This is Kynurenine formamidase from Bacillus thuringiensis (strain Al Hakam).